A 103-amino-acid chain; its full sequence is DNA-directed RNA polymerase subunit omega (103 aa).

It belongs to the RNA polymerase subunit omega family. As to quaternary structure, the RNAP catalytic core consists of 2 alpha, 1 beta, 1 beta' and 1 omega subunit. When a sigma factor is associated with the core the holoenzyme is formed, which can initiate transcription.

It carries out the reaction RNA(n) + a ribonucleoside 5'-triphosphate = RNA(n+1) + diphosphate. Its function is as follows. Promotes RNA polymerase assembly. Latches the N- and C-terminal regions of the beta' subunit thereby facilitating its interaction with the beta and alpha subunits. This Streptococcus agalactiae serotype III (strain NEM316) protein is DNA-directed RNA polymerase subunit omega.